Here is an 824-residue protein sequence, read N- to C-terminus: Spindle-defective protein 2 (824 aa).

Acidic residues-rich tracts occupy residues 16–27 (EIEDSPIDDNDN) and 35–44 (GDVELEEEEV). Residues 16–98 (EIEDSPIDDN…SRPASVMSDK (83 aa)) are disordered. A compositionally biased stretch (polar residues) spans 59-70 (TNMTNPKVNDLT). Over residues 81–98 (SAASSRSASRPASVMSDK) the composition is skewed to low complexity. Residues 111 to 131 (ENAIEEYTNQVFADENKADLL) adopt a coiled-coil conformation. The tract at residues 189-252 (RAKPGANDNE…GQYQGPNFDL (64 aa)) is disordered. A compositionally biased stretch (polar residues) spans 207–225 (NVPTTSDKSAFITSPMNST). A coiled-coil region spans residues 304-324 (NNKNQDLFAALEEARKRRAAQ). Disordered regions lie at residues 342-372 (KPTS…LTTS) and 433-455 (NNGN…VRTM). Positions 349-366 (SGNVVSSTSNDNTTAASS) are enriched in low complexity.

In terms of assembly, interacts with sas-7 (via C-terminus); may be recruited to centrioles by sas-7.

The protein resides in the cytoplasm. It localises to the cytoskeleton. It is found in the microtubule organizing center. Its subcellular location is the centrosome. The protein localises to the centriole. Required both for centrosome duplication and maturation. Required for pericentriolar material (PCM) recruitment. The polypeptide is Spindle-defective protein 2 (Caenorhabditis elegans).